The sequence spans 229 residues: Urease accessory protein UreG (229 aa).

Basic and acidic residues predominate over residues 1 to 15 (MPPHFIDGEPHDHQH). A disordered region spans residues 1–20 (MPPHFIDGEPHDHQHDRPRR). Position 34 to 41 (34 to 41 (GPVGSGKT)) interacts with GTP.

The protein belongs to the SIMIBI class G3E GTPase family. UreG subfamily. As to quaternary structure, homodimer. UreD, UreF and UreG form a complex that acts as a GTP-hydrolysis-dependent molecular chaperone, activating the urease apoprotein by helping to assemble the nickel containing metallocenter of UreC. The UreE protein probably delivers the nickel.

It is found in the cytoplasm. In terms of biological role, facilitates the functional incorporation of the urease nickel metallocenter. This process requires GTP hydrolysis, probably effectuated by UreG. This chain is Urease accessory protein UreG, found in Rhodococcus jostii (strain RHA1).